We begin with the raw amino-acid sequence, 463 residues long: ATP synthase subunit beta (463 aa).

151-158 (GGAGVGKT) provides a ligand contact to ATP.

It belongs to the ATPase alpha/beta chains family. As to quaternary structure, F-type ATPases have 2 components, CF(1) - the catalytic core - and CF(0) - the membrane proton channel. CF(1) has five subunits: alpha(3), beta(3), gamma(1), delta(1), epsilon(1). CF(0) has three main subunits: a(1), b(2) and c(9-12). The alpha and beta chains form an alternating ring which encloses part of the gamma chain. CF(1) is attached to CF(0) by a central stalk formed by the gamma and epsilon chains, while a peripheral stalk is formed by the delta and b chains.

It localises to the cell membrane. The enzyme catalyses ATP + H2O + 4 H(+)(in) = ADP + phosphate + 5 H(+)(out). Its function is as follows. Produces ATP from ADP in the presence of a proton gradient across the membrane. The catalytic sites are hosted primarily by the beta subunits. The polypeptide is ATP synthase subunit beta (Clostridium botulinum (strain Loch Maree / Type A3)).